The primary structure comprises 255 residues: ATP synthase subunit a (255 aa).

Positions 1–7 (MMFNNII) are cleaved as a propeptide — removed in mature form. Helical transmembrane passes span 35 to 55 (FGFY…LITY), 91 to 111 (YFPF…LGLI), 120 to 140 (HFIL…ILGF), 147 to 167 (FFSL…LVLI), 177 to 197 (VSLG…LVIL), and 208 to 228 (GIFY…FSGL).

The protein belongs to the ATPase A chain family. In terms of assembly, F-type ATPases have 2 components, CF(1) - the catalytic core - and CF(0) - the membrane proton channel. CF(1) has five subunits: alpha(3), beta(3), gamma(1), delta(1), epsilon(1). CF(0) has three main subunits: a, b and c.

Its subcellular location is the mitochondrion inner membrane. Functionally, mitochondrial membrane ATP synthase (F(1)F(0) ATP synthase or Complex V) produces ATP from ADP in the presence of a proton gradient across the membrane which is generated by electron transport complexes of the respiratory chain. F-type ATPases consist of two structural domains, F(1) - containing the extramembraneous catalytic core and F(0) - containing the membrane proton channel, linked together by a central stalk and a peripheral stalk. During catalysis, ATP synthesis in the catalytic domain of F(1) is coupled via a rotary mechanism of the central stalk subunits to proton translocation. Key component of the proton channel; it may play a direct role in the translocation of protons across the membrane. The chain is ATP synthase subunit a (ATP6) from Trichophyton rubrum (Athlete's foot fungus).